We begin with the raw amino-acid sequence, 502 residues long: Glycerol kinase (502 aa).

Thr14 is a binding site for ADP. ATP contacts are provided by Thr14, Thr15, and Ser16. Thr14 lines the sn-glycerol 3-phosphate pocket. Arg18 contacts ADP. Sn-glycerol 3-phosphate is bound by residues Arg84, Glu85, Tyr136, and Asp246. Residues Arg84, Glu85, Tyr136, Asp246, and Gln247 each contribute to the glycerol site. Thr268 and Gly311 together coordinate ADP. Thr268, Gly311, Gln315, and Gly412 together coordinate ATP. ADP is bound by residues Gly412 and Asn416.

It belongs to the FGGY kinase family. As to quaternary structure, homotetramer and homodimer (in equilibrium). Heterodimer with EIIA-Glc. Binds 1 zinc ion per glycerol kinase EIIA-Glc dimer. The zinc ion is important for dimerization.

The enzyme catalyses glycerol + ATP = sn-glycerol 3-phosphate + ADP + H(+). Its pathway is polyol metabolism; glycerol degradation via glycerol kinase pathway; sn-glycerol 3-phosphate from glycerol: step 1/1. Its activity is regulated as follows. Activity of this regulatory enzyme is affected by several metabolites. Allosterically and non-competitively inhibited by fructose 1,6-bisphosphate (FBP) and unphosphorylated phosphocarrier protein EIIA-Glc (III-Glc), an integral component of the bacterial phosphotransferase (PTS) system. Key enzyme in the regulation of glycerol uptake and metabolism. Catalyzes the phosphorylation of glycerol to yield sn-glycerol 3-phosphate. The chain is Glycerol kinase from Escherichia coli O127:H6 (strain E2348/69 / EPEC).